Reading from the N-terminus, the 244-residue chain is Serine-rich single-pass membrane protein 1 (244 aa).

The helical transmembrane segment at 35 to 55 (CGTIGSFLLWYFVIVFVLMFF) threads the bilayer. 3 disordered regions span residues 65-114 (DKKD…PVTN), 126-191 (QRRA…LGSY), and 210-244 (LAHH…FSKF). A compositionally biased stretch (basic and acidic residues) spans 80–94 (ASKETSCKRQSKDSA). 2 stretches are compositionally biased toward polar residues: residues 96 to 114 (DPSQ…PVTN) and 132 to 142 (QSQFNEVNQNQ). A compositionally biased stretch (basic and acidic residues) spans 161 to 176 (SWKESESEHHPSPDSI).

The protein localises to the membrane. In Homo sapiens (Human), this protein is Serine-rich single-pass membrane protein 1 (SSMEM1).